Consider the following 793-residue polypeptide: Copalyl diphosphate synthase CPS1, chloroplastic (793 aa).

The N-terminal 59 residues, 1–59 (MASLSSTILSRSPAARRRITPASAKLHRPECFATSAWMGSSSKNLSLSYQLNHKKISVA), are a transit peptide targeting the chloroplast. A substrate-binding site is contributed by lysine 238. 2 residues coordinate Mg(2+): aspartate 370 and aspartate 372. The DXDD motif signature appears at 370–373 (DIDD). Substrate is bound at residue lysine 457.

Belongs to the terpene synthase family. Requires Mg(2+) as cofactor.

Its subcellular location is the plastid. It is found in the chloroplast. It carries out the reaction (2E,6E,10E)-geranylgeranyl diphosphate = (+)-copalyl diphosphate. It functions in the pathway secondary metabolite biosynthesis; terpenoid biosynthesis. Its function is as follows. Involved in tanshinone biosynthesis in hairy roots. Catalyzes the conversion of geranylgeranyl diphosphate (GGPP) to copalyl diphosphate (CPP). In Salvia miltiorrhiza (Chinese sage), this protein is Copalyl diphosphate synthase CPS1, chloroplastic.